The following is a 498-amino-acid chain: ATP synthase subunit beta, chloroplastic (498 aa).

172–179 (GGAGVGKT) lines the ATP pocket.

This sequence belongs to the ATPase alpha/beta chains family. In terms of assembly, F-type ATPases have 2 components, CF(1) - the catalytic core - and CF(0) - the membrane proton channel. CF(1) has five subunits: alpha(3), beta(3), gamma(1), delta(1), epsilon(1). CF(0) has four main subunits: a(1), b(1), b'(1) and c(9-12).

It is found in the plastid. The protein localises to the chloroplast thylakoid membrane. The catalysed reaction is ATP + H2O + 4 H(+)(in) = ADP + phosphate + 5 H(+)(out). In terms of biological role, produces ATP from ADP in the presence of a proton gradient across the membrane. The catalytic sites are hosted primarily by the beta subunits. This is ATP synthase subunit beta, chloroplastic from Magnolia tripetala (Umbrella-tree).